The sequence spans 383 residues: 6-hydroxynicotinate 3-monooxygenase (383 aa).

The N-terminal stretch at 1–26 (MQGKPRIAVIGAGLGGTAGAALMARA) is a signal peptide. FAD contacts are provided by residues Gly15, 34–35 (EQ), His47, Arg108, and Leu130. His47 functions as the Proton acceptor in the catalytic mechanism. The active-site Proton acceptor is Tyr214. FAD contacts are provided by residues Asp293 and 306–307 (AA).

Belongs to the 6-hydroxynicotinate 3-monooxygenase family. As to quaternary structure, monomer. Requires FAD as cofactor.

The enzyme catalyses 6-hydroxynicotinate + NADH + O2 + 2 H(+) = 2,5-dihydroxypyridine + CO2 + NAD(+) + H2O. It participates in cofactor degradation; nicotinate degradation. Competitively inhibited by 6-hydroxynicotinaldehyde. In terms of biological role, flavin-dependent monooxygenase (FMO) that catalyzes the decarboxylative hydroxylation of 6-hydroxynicotinic acid (6-HNA) to 2,5-dihydroxypyridine (2,5-DHP) with concomitant oxidation of NADH, a step in the aerobic nicotinate degradation pathway. Is also active on the non-natural substrate 5-chloro-6-hydroxynicotinate, and is much less efficient on the substrate analog 4-hydroxybenzoate. This is 6-hydroxynicotinate 3-monooxygenase from Bordetella bronchiseptica (strain ATCC BAA-588 / NCTC 13252 / RB50) (Alcaligenes bronchisepticus).